A 420-amino-acid chain; its full sequence is Riboflavin biosynthesis protein RibBA (420 aa).

Residues 1–202 are DHBP synthase; it reads MTTFGTIEQA…IADLVAYRRR (202 aa). D-ribulose 5-phosphate contacts are provided by residues 28–29, Asp-33, 141–145, and Glu-165; these read RE and RPGHT. Position 29 (Glu-29) interacts with Mg(2+). His-144 contacts Mg(2+). The GTP cyclohydrolase II stretch occupies residues 203–420; sequence TEKQVELVAE…RAVVGDGIGA (218 aa). GTP is bound at residue 253–257; it reads RVHSE. Zn(2+)-binding residues include Cys-258, Cys-269, and Cys-271. Residues Gln-274, 297 to 299, and Thr-319 each bind GTP; that span reads EGR. Catalysis depends on Asp-331, which acts as the Proton acceptor; for GTP cyclohydrolase activity. Catalysis depends on Arg-333, which acts as the Nucleophile; for GTP cyclohydrolase activity. Residues Thr-354 and Lys-359 each contribute to the GTP site.

The protein in the N-terminal section; belongs to the DHBP synthase family. It in the C-terminal section; belongs to the GTP cyclohydrolase II family. It depends on Mg(2+) as a cofactor. Requires Mn(2+) as cofactor. Zn(2+) is required as a cofactor.

The catalysed reaction is D-ribulose 5-phosphate = (2S)-2-hydroxy-3-oxobutyl phosphate + formate + H(+). It catalyses the reaction GTP + 4 H2O = 2,5-diamino-6-hydroxy-4-(5-phosphoribosylamino)-pyrimidine + formate + 2 phosphate + 3 H(+). The protein operates within cofactor biosynthesis; riboflavin biosynthesis; 2-hydroxy-3-oxobutyl phosphate from D-ribulose 5-phosphate: step 1/1. Its pathway is cofactor biosynthesis; riboflavin biosynthesis; 5-amino-6-(D-ribitylamino)uracil from GTP: step 1/4. Functionally, catalyzes the conversion of D-ribulose 5-phosphate to formate and 3,4-dihydroxy-2-butanone 4-phosphate. Its function is as follows. Catalyzes the conversion of GTP to 2,5-diamino-6-ribosylamino-4(3H)-pyrimidinone 5'-phosphate (DARP), formate and pyrophosphate. This Salinispora arenicola (strain CNS-205) protein is Riboflavin biosynthesis protein RibBA.